Consider the following 252-residue polypeptide: 5-oxoprolinase subunit A (252 aa).

Belongs to the LamB/PxpA family. As to quaternary structure, forms a complex composed of PxpA, PxpB and PxpC.

It catalyses the reaction 5-oxo-L-proline + ATP + 2 H2O = L-glutamate + ADP + phosphate + H(+). In terms of biological role, catalyzes the cleavage of 5-oxoproline to form L-glutamate coupled to the hydrolysis of ATP to ADP and inorganic phosphate. This is 5-oxoprolinase subunit A from Mycobacterium marinum (strain ATCC BAA-535 / M).